Reading from the N-terminus, the 417-residue chain is Cysteate synthase (417 aa).

Residue Lys104 is modified to N6-(pyridoxal phosphate)lysine. Pyridoxal 5'-phosphate is bound by residues Asn131 and Thr371.

The protein belongs to the threonine synthase family. Cysteate synthase subfamily. As to quaternary structure, homotrimer. Pyridoxal 5'-phosphate is required as a cofactor.

It carries out the reaction O-phospho-L-serine + sulfite + H(+) = L-cysteate + phosphate. The protein operates within cofactor biosynthesis; coenzyme M biosynthesis. Specifically catalyzes the beta-elimination of phosphate from L-phosphoserine and the beta-addition of sulfite to the dehydroalanine intermediate to produce L-cysteate. The polypeptide is Cysteate synthase (Methanococcoides burtonii (strain DSM 6242 / NBRC 107633 / OCM 468 / ACE-M)).